The primary structure comprises 184 residues: Inactive cytochrome P450 monooxygenase lolP2 (184 aa).

Residues 10-30 form a helical membrane-spanning segment; that stretch reads GIVWLTVAAIAISYILQSSFL. The tract at residues 161-184 is disordered; it reads RRTRGSRPRSRPRWMPARWSRSSP. The span at 163–172 shows a compositional bias: basic residues; sequence TRGSRPRSRP. The span at 173-184 shows a compositional bias: low complexity; it reads RWMPARWSRSSP.

It belongs to the cytochrome P450 family.

It is found in the membrane. Functionally, cytochrome P450 monooxygenase; part of the gene cluster that mediates the biosynthesis of loline alkaloids, potent insecticidal agents composed of a pyrrolizidine ring system and an uncommon ether bridge linking carbons 2 and 7. Lolines are structurally differentiated by the various modifications of the L-amino group and include norloline, loline, N-methylloline, N-acetylloline, N-acetylnorloline, and N-formylloline. The first committed step is the condensation of O-acetyl-L-homoserine (derived from L-aspartic acid) and L-proline, probably catalyzed by the gamma-type pyridoxal 5'-phosphate(PLP)-dependent enzyme lolC, to give the diamino diacid, NACPP. Ensuing cyclization, decarboxylation, and acetylation steps yield 1-exo-acetamidopyrrolizidine (AcAP). LolO is required for installation of the ether bridge upon the pathway intermediate, 1-exo-acetamidopyrrolizidine (AcAP). In sequential 2-oxoglutarate- and O(2)-consuming steps, lolO removes hydrogens from C2 and C7 of AcAP to form both carbon-oxygen bonds in N-acetylnorloline (NANL), the precursor to all other lolines. The enzymes lolD, lolE, lolF and lolT have also been proposed to be involved in the ether-bridge installation. Further processing of the exocyclic moiety of NANL by fungal N-acetamidase (LolN), methyltransferase (LolM), and cytochrome P450 (LolP) enzymes, with occasional involvement of a plant acetyltransferase, generates the other known lolines. LolN transforms NANL to norlonine which is monomethylated and dimethylated to respectively lonine and N-methyllonine (NML) by lolM. LolP catalyzes hydroxylation of the methyl group in N-methylloline (NML) and further oxygenation to N-formylloline (NFL). A plant acetyltransferase is responsible for the acetylation of loline to form N-acetylloline (NAL). LolA might interact with aspartate kinase to prevent feedback inhibition of its activity by these end products and thereby promote production of L-homoserine from L-aspartate. This Epichloe uncinata (Endophyte fungus) protein is Inactive cytochrome P450 monooxygenase lolP2.